The following is a 514-amino-acid chain: HERV-H LTR-associating protein 1 homolog (514 aa).

The N-terminal stretch at 1-29 (MQSFLLHCPPIRLCMGLACILFLWNAVSG) is a signal peptide. Asparagine 58, asparagine 97, asparagine 139, asparagine 161, asparagine 179, asparagine 200, asparagine 217, asparagine 232, and asparagine 321 each carry an N-linked (GlcNAc...) asparagine glycan. The tract at residues 379–420 (LHPTGILTTPSRLAQPSRASGTLMPGTQTTNPTQAPAPRVPQ) is disordered. A compositionally biased stretch (polar residues) spans 384–398 (ILTTPSRLAQPSRAS). Residues 403 to 415 (PGTQTTNPTQAPA) show a composition bias toward low complexity.

The protein localises to the secreted. The polypeptide is HERV-H LTR-associating protein 1 homolog (Hhla1) (Mus musculus (Mouse)).